The sequence spans 70 residues: NADH dehydrogenase [ubiquinone] 1 alpha subcomplex subunit 1 (70 aa).

The chain crosses the membrane as a helical span at residues M1–M21.

It belongs to the complex I NDUFA1 subunit family. Complex I is composed of 45 different subunits.

It localises to the mitochondrion inner membrane. In terms of biological role, accessory subunit of the mitochondrial membrane respiratory chain NADH dehydrogenase (Complex I), that is believed not to be involved in catalysis. Complex I functions in the transfer of electrons from NADH to the respiratory chain. The immediate electron acceptor for the enzyme is believed to be ubiquinone. The sequence is that of NADH dehydrogenase [ubiquinone] 1 alpha subcomplex subunit 1 (NDUFA1) from Bos taurus (Bovine).